The sequence spans 84 residues: ATP synthase subunit c (84 aa).

2 helical membrane-spanning segments follow: residues 13–33 (IAVG…WGLI) and 56–76 (FIFA…GFWF).

Belongs to the ATPase C chain family. In terms of assembly, F-type ATPases have 2 components, F(1) - the catalytic core - and F(0) - the membrane proton channel. F(1) has five subunits: alpha(3), beta(3), gamma(1), delta(1), epsilon(1). F(0) has three main subunits: a(1), b(2) and c(10-14). The alpha and beta chains form an alternating ring which encloses part of the gamma chain. F(1) is attached to F(0) by a central stalk formed by the gamma and epsilon chains, while a peripheral stalk is formed by the delta and b chains.

The protein resides in the cell inner membrane. Its function is as follows. F(1)F(0) ATP synthase produces ATP from ADP in the presence of a proton or sodium gradient. F-type ATPases consist of two structural domains, F(1) containing the extramembraneous catalytic core and F(0) containing the membrane proton channel, linked together by a central stalk and a peripheral stalk. During catalysis, ATP synthesis in the catalytic domain of F(1) is coupled via a rotary mechanism of the central stalk subunits to proton translocation. In terms of biological role, key component of the F(0) channel; it plays a direct role in translocation across the membrane. A homomeric c-ring of between 10-14 subunits forms the central stalk rotor element with the F(1) delta and epsilon subunits. In Acidithiobacillus ferrooxidans (strain ATCC 23270 / DSM 14882 / CIP 104768 / NCIMB 8455) (Ferrobacillus ferrooxidans (strain ATCC 23270)), this protein is ATP synthase subunit c.